Reading from the N-terminus, the 254-residue chain is Ribonuclease HII (254 aa).

The RNase H type-2 domain maps to 70-254 (TCIAGIDEAG…SFAPVKSVIS (185 aa)). Positions 76, 77, and 168 each coordinate a divalent metal cation.

This sequence belongs to the RNase HII family. It depends on Mn(2+) as a cofactor. Mg(2+) is required as a cofactor.

It is found in the cytoplasm. The enzyme catalyses Endonucleolytic cleavage to 5'-phosphomonoester.. Endonuclease that specifically degrades the RNA of RNA-DNA hybrids. The polypeptide is Ribonuclease HII (Bacillus pumilus (strain SAFR-032)).